The chain runs to 428 residues: 26S proteasome regulatory subunit 7 (428 aa).

ATP is bound at residue 211 to 218; the sequence is GPPGTGKT.

It belongs to the AAA ATPase family.

It is found in the cytoplasm. The protein localises to the nucleus. Functionally, the 26S proteasome is involved in the ATP-dependent degradation of ubiquitinated proteins. The regulatory (or ATPase) complex confers ATP dependency and substrate specificity to the 26S complex. This is 26S proteasome regulatory subunit 7 (psmC2) from Dictyostelium discoideum (Social amoeba).